The sequence spans 218 residues: MSIGILGKKLGMSQFFDEEGKAVPVTLIEAGPCRITQLKSIDTDGYTAVQLGYGETRQKLVNKPSKGHLARSGEQLLSHLREYRVETIDGLKLGNSITVEDFKAGQKVDVSGDSMGRGFSGYQKRHGFSRGPMTHGSKNHREPGSTGAGTTPGRIYPGKRMAGRYGGKQITTRGLVIVKVDTGHNLLVVKGSVPGKPGSLLNIFPAKGVNSKFANGGK.

A disordered region spans residues 127–161 (GFSRGPMTHGSKNHREPGSTGAGTTPGRIYPGKRM).

This sequence belongs to the universal ribosomal protein uL3 family. As to quaternary structure, part of the 50S ribosomal subunit.

It localises to the plastid. Its subcellular location is the organellar chromatophore. Functionally, one of the primary rRNA binding proteins, it binds directly near the 3'-end of the 23S rRNA, where it nucleates assembly of the 50S subunit. This Paulinella chromatophora protein is Large ribosomal subunit protein uL3c (rpl3).